The following is a 398-amino-acid chain: NADH-ubiquinone oxidoreductase 49 kDa subunit (398 aa).

Belongs to the complex I 49 kDa subunit family.

Its subcellular location is the mitochondrion. It catalyses the reaction a ubiquinone + NADH + 5 H(+)(in) = a ubiquinol + NAD(+) + 4 H(+)(out). Its function is as follows. Core subunit of the mitochondrial membrane respiratory chain NADH dehydrogenase (Complex I) that is believed to belong to the minimal assembly required for catalysis. Complex I functions in the transfer of electrons from NADH to the respiratory chain. The immediate electron acceptor for the enzyme is believed to be ubiquinone. Component of the iron-sulfur (IP) fragment of the enzyme. Component of the iron-sulfur (IP) fragment of the enzyme. This Pylaiella littoralis (Seaweed) protein is NADH-ubiquinone oxidoreductase 49 kDa subunit (NAD7).